The following is a 489-amino-acid chain: UDP-N-acetylmuramate--L-alanine ligase (489 aa).

ATP is bound at residue 128–134 (GTHGKTT).

Belongs to the MurCDEF family.

It localises to the cytoplasm. It catalyses the reaction UDP-N-acetyl-alpha-D-muramate + L-alanine + ATP = UDP-N-acetyl-alpha-D-muramoyl-L-alanine + ADP + phosphate + H(+). The protein operates within cell wall biogenesis; peptidoglycan biosynthesis. In terms of biological role, cell wall formation. This Shewanella pealeana (strain ATCC 700345 / ANG-SQ1) protein is UDP-N-acetylmuramate--L-alanine ligase.